The primary structure comprises 175 residues: Ribosome maturation factor RimM (175 aa).

A PRC barrel domain is found at 100–174 (EDEYYWNDVI…VKHKIITVIW (75 aa)).

Belongs to the RimM family. Binds ribosomal protein uS19.

It is found in the cytoplasm. Functionally, an accessory protein needed during the final step in the assembly of 30S ribosomal subunit, possibly for assembly of the head region. Essential for efficient processing of 16S rRNA. May be needed both before and after RbfA during the maturation of 16S rRNA. It has affinity for free ribosomal 30S subunits but not for 70S ribosomes. This chain is Ribosome maturation factor RimM, found in Buchnera aphidicola subsp. Schizaphis graminum (strain Sg).